Reading from the N-terminus, the 690-residue chain is DNA ligase (690 aa).

Residues 49 to 53 (DAEYD), 98 to 99 (SL), and E129 each bind NAD(+). K131 (N6-AMP-lysine intermediate) is an active-site residue. NAD(+) is bound by residues R152, E191, K308, and K332. Positions 426, 429, 444, and 450 each coordinate Zn(2+). The BRCT domain maps to 607–690 (EDAARLEGLT…ALLREQGIDA (84 aa)).

The protein belongs to the NAD-dependent DNA ligase family. LigA subfamily. The cofactor is Mg(2+). Mn(2+) serves as cofactor.

It carries out the reaction NAD(+) + (deoxyribonucleotide)n-3'-hydroxyl + 5'-phospho-(deoxyribonucleotide)m = (deoxyribonucleotide)n+m + AMP + beta-nicotinamide D-nucleotide.. Its function is as follows. DNA ligase that catalyzes the formation of phosphodiester linkages between 5'-phosphoryl and 3'-hydroxyl groups in double-stranded DNA using NAD as a coenzyme and as the energy source for the reaction. It is essential for DNA replication and repair of damaged DNA. This chain is DNA ligase, found in Salinibacter ruber (strain DSM 13855 / M31).